The chain runs to 565 residues: Oxygen-dependent choline dehydrogenase (565 aa).

6-35 (DYIIVGAGSAGNTLATRLTEDAGVTVLLLE) is an FAD binding site. His475 (proton acceptor) is an active-site residue.

The protein belongs to the GMC oxidoreductase family. The cofactor is FAD.

It catalyses the reaction choline + A = betaine aldehyde + AH2. The catalysed reaction is betaine aldehyde + NAD(+) + H2O = glycine betaine + NADH + 2 H(+). It participates in amine and polyamine biosynthesis; betaine biosynthesis via choline pathway; betaine aldehyde from choline (cytochrome c reductase route): step 1/1. Involved in the biosynthesis of the osmoprotectant glycine betaine. Catalyzes the oxidation of choline to betaine aldehyde and betaine aldehyde to glycine betaine at the same rate. This is Oxygen-dependent choline dehydrogenase from Pseudomonas putida (strain GB-1).